Consider the following 144-residue polypeptide: Putative pre-16S rRNA nuclease (144 aa).

This sequence belongs to the YqgF nuclease family.

The protein resides in the cytoplasm. In terms of biological role, could be a nuclease involved in processing of the 5'-end of pre-16S rRNA. The polypeptide is Putative pre-16S rRNA nuclease (Chlorobium phaeobacteroides (strain BS1)).